The following is a 338-amino-acid chain: Ferrochelatase (338 aa).

Positions 207 and 293 each coordinate Fe cation.

The protein belongs to the ferrochelatase family.

The protein resides in the cytoplasm. The catalysed reaction is heme b + 2 H(+) = protoporphyrin IX + Fe(2+). It functions in the pathway porphyrin-containing compound metabolism; protoheme biosynthesis; protoheme from protoporphyrin-IX: step 1/1. In terms of biological role, catalyzes the ferrous insertion into protoporphyrin IX. In Shewanella denitrificans (strain OS217 / ATCC BAA-1090 / DSM 15013), this protein is Ferrochelatase.